Consider the following 378-residue polypeptide: tRNA-specific 2-thiouridylase MnmA (378 aa).

ATP is bound by residues 9-16 (GVSGGVDS) and Met35. Positions 94–96 (NPD) are interaction with target base in tRNA. The Nucleophile role is filled by Cys99. Residues Cys99 and Cys195 are joined by a disulfide bond. Gly123 is a binding site for ATP. Residues 145-147 (KDQ) form an interaction with tRNA region. The Cysteine persulfide intermediate role is filled by Cys195. The interval 307–308 (RY) is interaction with tRNA.

The protein belongs to the MnmA/TRMU family.

The protein localises to the cytoplasm. It catalyses the reaction S-sulfanyl-L-cysteinyl-[protein] + uridine(34) in tRNA + AH2 + ATP = 2-thiouridine(34) in tRNA + L-cysteinyl-[protein] + A + AMP + diphosphate + H(+). Its function is as follows. Catalyzes the 2-thiolation of uridine at the wobble position (U34) of tRNA, leading to the formation of s(2)U34. In Xanthomonas euvesicatoria pv. vesicatoria (strain 85-10) (Xanthomonas campestris pv. vesicatoria), this protein is tRNA-specific 2-thiouridylase MnmA.